The sequence spans 110 residues: uncharacterized protein (110 aa).

This sequence belongs to the RuBisCO large chain family.

It localises to the mitochondrion. This is an uncharacterized protein from Arabidopsis thaliana (Mouse-ear cress).